The primary structure comprises 1369 residues: MAAAAASGAGGVAVAGAGGAGPAGRLLPPPAAGPPAAPAAVPPAAVPARPTAPASRGSMAARIGYYEIDRTIGKGNFAVVKRATHLVTKAKVAIKIIDKSQLDEENLKKIFREVQIMKMLCHPHIIRLYQVMETERMIYLVTEYASGGEIFDHLVAHGRMAEKEARRKFKQIVTAVYFCHCRNIVHRDLKAENLLLDANLNIKIADFGFSNLFTPGQLLKTWCGSPPYAAPELFEGKEYDGPKVDIWSLGVVLYVLVCGALPFDGSTLQNLRARVLSGKFRIPFFMSTECEHLIRHMLVLDPNKRLSMEQICRHKWMKLGDADPNFDRLIAECQQLKEERQSDPLNDDVLLAMEDMGLDKERTLQSLRSDAYDHYSAIYSLLCDRHKKHKTLRPGALPSMPQAMTFQAPVNLQAEQTGTAMNLSVPQVQLINPENQIIEPDGAVNLDSDEGEEPSPEALVRYLSMRRHTVGVADPRTEVMEDLQKLLPGFPGVNPQGPFLQVAPNMNFTHNLLPMQSLQPTGQLEYKEQSLLQPPTLQLLNGMGPLGRRASDGGANIQLHAQQLLKRPRGPSPLVTMTPAVPAVTPVDEESSDGEPDQEAVQRYLANRSKRHTLAMTSPTAEIPPDLQRQLGQQSFRSRVWPPHLVPDQHRSTYKDSNTLHLPTERFSPVRRFSDGAASIQAFKAHLEKMGNSSSIKQLQQECEQLQKMYGGQVDERTLEKTQQQHMLYQQEQHHQILQQQIQDSICPPQPSPPLQVACENQPALLTHQLQRLRIQPSSPPPNHPSNHLFRQPSNSPPPVSSAMITSHGATSPSQFQGLPSHGAIFQQQPENCSPPPSVALTCLGLQQASQSQPVTIQLQEPVDMLSNMAGTAAGSAGRSIPISPSASQIQIQHRASLMAPFSYGHRPLSKQLSADSAEAHSLNMNRFSPANYDQAHLHPHLFSDQSRGSPSSYSPSTGVGFPPTQALKVPPLDQFPTFPPSAQQQPPHYTTSALQQALLSPTPPDYPRHQQVPHILQGLLSPRHSLTGHSDIRLPPAEFAQLIKRQQQHRQQQQQQQQQQEYHELFRHMNQGDAVSLAPSLGGQNMTEQQALSYQNADSYHRHHTSPQHILQIRAQDCISQGPSPTPTHGYAHQPPLMHSESMEEDCLCEGLKEGFPDKSSSTLTKGCHNSPLLLCTSGPGDPEPLLGTVSQARELGIHPYGHQPTATTFSRNKVPSRESVLGNCLERSSPGQAMELPDHNGLGYPVRPLVSEHLRSRTLQRHHTIQNSDDAYVQLDTLPGMSLVAGKALSSARMSDAVLSQSSLMGSQQFQDEEDEECGVSLGHEHPGLGDGSQHLNSSRYPATCVTDIMLSHKHPEVSFSMEQAGV.

The segment at 26 to 55 (LLPPPAAGPPAAPAAVPPAAVPARPTAPAS) is disordered. Over residues 27 to 45 (LPPPAAGPPAAPAAVPPAA) the composition is skewed to pro residues. Low complexity predominate over residues 46-55 (VPARPTAPAS). A Protein kinase domain is found at 66–317 (YEIDRTIGKG…MEQICRHKWM (252 aa)). Threonine 71 carries the phosphothreonine modification. Residues 72 to 80 (IGKGNFAVV) and lysine 95 contribute to the ATP site. The Proton acceptor role is filled by aspartate 188. At threonine 221 the chain carries Phosphothreonine. A UBA domain is found at 344–384 (PLNDDVLLAMEDMGLDKERTLQSLRSDAYDHYSAIYSLLCD). Threonine 469 carries the phosphothreonine modification. A phosphoserine mark is found at serine 551, serine 591, serine 592, serine 674, and serine 695. A disordered region spans residues 775–821 (IQPSSPPPNHPSNHLFRQPSNSPPPVSSAMITSHGATSPSQFQGLPS). Positions 803-818 (AMITSHGATSPSQFQG) are enriched in polar residues. A Phosphoserine modification is found at serine 914. Residues 942–993 (LFSDQSRGSPSSYSPSTGVGFPPTQALKVPPLDQFPTFPPSAQQQPPHYTTS) are disordered. The segment covering 944 to 957 (SDQSRGSPSSYSPS) has biased composition (low complexity). Polar residues predominate over residues 981–993 (PSAQQQPPHYTTS). A Phosphoserine modification is found at serine 1026. Arginine 1034 carries the omega-N-methylarginine modification. Positions 1314–1338 (DEEDEECGVSLGHEHPGLGDGSQHL) are disordered.

Belongs to the protein kinase superfamily. CAMK Ser/Thr protein kinase family. SNF1 subfamily. As to quaternary structure, binds to and is activated by YWHAZ when phosphorylated on Thr-221. Interacts with 14-3-3 proteins. Interacts with HDAC4; this interaction leads to HDAC4 retention in the cytoplasm. Interacts with DEPTOR, MLST8/GbetaL, RICTOR and RPTOR. It depends on Mg(2+) as a cofactor. Phosphorylated at Thr-221 by STK11/LKB1 in complex with STE20-related adapter-alpha (STRADA) pseudo kinase and CAB39. Expressed in hypertrophic chondrocytes in the growth plate.

It localises to the cytoplasm. The catalysed reaction is L-seryl-[protein] + ATP = O-phospho-L-seryl-[protein] + ADP + H(+). It carries out the reaction L-threonyl-[protein] + ATP = O-phospho-L-threonyl-[protein] + ADP + H(+). With respect to regulation, activated by phosphorylation on Thr-221. Its function is as follows. Positive regulator of mTOR signaling that functions by triggering the degradation of DEPTOR, an mTOR inhibitor. Required for chondrocyte hypertrophy during skeletogenesis. Negatively regulates cAMP signaling pathway possibly by acting on CRTC2/TORC2 and CRTC3/TORC3. Prevents HDAC4 translocation to the nucleus. This is Serine/threonine-protein kinase SIK3 (Sik3) from Mus musculus (Mouse).